We begin with the raw amino-acid sequence, 203 residues long: Thymidylate kinase (203 aa).

ATP is bound at residue 10–17; that stretch reads GIDGCGKT.

It belongs to the thymidylate kinase family.

It carries out the reaction dTMP + ATP = dTDP + ADP. Its function is as follows. Phosphorylation of dTMP to form dTDP in both de novo and salvage pathways of dTTP synthesis. The protein is Thymidylate kinase of Thermoanaerobacter pseudethanolicus (strain ATCC 33223 / 39E) (Clostridium thermohydrosulfuricum).